We begin with the raw amino-acid sequence, 143 residues long: SsrA-binding protein (143 aa).

It belongs to the SmpB family.

The protein resides in the cytoplasm. In terms of biological role, required for rescue of stalled ribosomes mediated by trans-translation. Binds to transfer-messenger RNA (tmRNA), required for stable association of tmRNA with ribosomes. tmRNA and SmpB together mimic tRNA shape, replacing the anticodon stem-loop with SmpB. tmRNA is encoded by the ssrA gene; the 2 termini fold to resemble tRNA(Ala) and it encodes a 'tag peptide', a short internal open reading frame. During trans-translation Ala-aminoacylated tmRNA acts like a tRNA, entering the A-site of stalled ribosomes, displacing the stalled mRNA. The ribosome then switches to translate the ORF on the tmRNA; the nascent peptide is terminated with the 'tag peptide' encoded by the tmRNA and targeted for degradation. The ribosome is freed to recommence translation, which seems to be the essential function of trans-translation. The chain is SsrA-binding protein from Deinococcus radiodurans (strain ATCC 13939 / DSM 20539 / JCM 16871 / CCUG 27074 / LMG 4051 / NBRC 15346 / NCIMB 9279 / VKM B-1422 / R1).